Consider the following 284-residue polypeptide: Nucleotide-binding protein SO_3964 (284 aa).

8 to 15 (GRSGSGKS) provides a ligand contact to ATP. 56 to 59 (DVRN) is a GTP binding site.

This sequence belongs to the RapZ-like family.

Its function is as follows. Displays ATPase and GTPase activities. The sequence is that of Nucleotide-binding protein SO_3964 from Shewanella oneidensis (strain ATCC 700550 / JCM 31522 / CIP 106686 / LMG 19005 / NCIMB 14063 / MR-1).